Consider the following 1298-residue polypeptide: Outer capsid protein VP1 (1298 aa).

This sequence belongs to the aquareoviridae outer capsid VP1 protein family.

It is found in the virion. It catalyses the reaction a 5'-end diphospho-ribonucleoside in mRNA + GTP + H(+) = a 5'-end (5'-triphosphoguanosine)-ribonucleoside in mRNA + diphosphate. It carries out the reaction a 5'-end (5'-triphosphoguanosine)-ribonucleoside in mRNA + S-adenosyl-L-methionine = a 5'-end (N(7)-methyl 5'-triphosphoguanosine)-ribonucleoside in mRNA + S-adenosyl-L-homocysteine. Its function is as follows. Outer capsid protein involved in mRNA capping. Catalyzes the last 3 enzymatic activities for formation of the 5' cap structure on the viral plus-strand transcripts, namely the RNA guanylyltransferase, RNA-7N- and RNA-2'O-methyltransferase activities. This chain is Outer capsid protein VP1 (S1), found in Ctenopharyngodon idella (Grass carp).